The following is a 154-amino-acid chain: Ribonuclease H (154 aa).

The 142-residue stretch at 1–142 (MLKQVEIFTD…CDELARRAAG (142 aa)) folds into the RNase H type-1 domain. Positions 10, 48, 70, and 134 each coordinate Mg(2+).

The protein belongs to the RNase H family. As to quaternary structure, monomer. The cofactor is Mg(2+).

It localises to the cytoplasm. It carries out the reaction Endonucleolytic cleavage to 5'-phosphomonoester.. Its function is as follows. Endonuclease that specifically degrades the RNA of RNA-DNA hybrids. This is Ribonuclease H from Edwardsiella ictaluri (strain 93-146).